Reading from the N-terminus, the 182-residue chain is Meiotically up-regulated gene 82 protein (182 aa).

Residues 161 to 182 (EKRLSEKKYKQKKKTQRRITMD) are disordered. Over residues 169–182 (YKQKKKTQRRITMD) the composition is skewed to basic residues.

It belongs to the prokaryotic/mitochondrial release factor family.

Its subcellular location is the mitochondrion. Its function is as follows. Has a role in meiosis. This Schizosaccharomyces pombe (strain 972 / ATCC 24843) (Fission yeast) protein is Meiotically up-regulated gene 82 protein (mug82).